A 117-amino-acid polypeptide reads, in one-letter code: Immunoglobulin heavy variable 3-21 (117 aa).

The N-terminal stretch at 1–19 (MELGLRWVFLVAILEGVQC) is a signal peptide. The segment at 20–44 (EVQLVESGGGLVKPGGSLRLSCAAS) is framework-1. The Ig-like domain maps to 20-117 (EVQLVESGGG…EDTAVYYCAR (98 aa)). Cysteine 41 and cysteine 115 form a disulfide bridge. Residues 45 to 52 (GFTFSSYS) are complementarity-determining-1. The interval 53–69 (MNWVRQAPGKGLEWVSS) is framework-2. The complementarity-determining-2 stretch occupies residues 70–77 (ISSSSSYI). Residues 78–115 (YYADSVKGRFTISRDNAKNSLYLQMNSLRAEDTAVYYC) form a framework-3 region. Positions 116–117 (AR) are complementarity-determining-3.

Immunoglobulins are composed of two identical heavy chains and two identical light chains; disulfide-linked.

The protein localises to the secreted. Its subcellular location is the cell membrane. Functionally, v region of the variable domain of immunoglobulin heavy chains that participates in the antigen recognition. Immunoglobulins, also known as antibodies, are membrane-bound or secreted glycoproteins produced by B lymphocytes. In the recognition phase of humoral immunity, the membrane-bound immunoglobulins serve as receptors which, upon binding of a specific antigen, trigger the clonal expansion and differentiation of B lymphocytes into immunoglobulins-secreting plasma cells. Secreted immunoglobulins mediate the effector phase of humoral immunity, which results in the elimination of bound antigens. The antigen binding site is formed by the variable domain of one heavy chain, together with that of its associated light chain. Thus, each immunoglobulin has two antigen binding sites with remarkable affinity for a particular antigen. The variable domains are assembled by a process called V-(D)-J rearrangement and can then be subjected to somatic hypermutations which, after exposure to antigen and selection, allow affinity maturation for a particular antigen. This chain is Immunoglobulin heavy variable 3-21, found in Homo sapiens (Human).